The following is a 609-amino-acid chain: Mitochondrial nucleoid-associated protein 1 (609 aa).

Over 1–552 the chain is Mitochondrial matrix; the sequence is MSDNPPRMEV…IRCNTTIRKS (552 aa). 3 disordered regions span residues 142-168, 183-202, and 410-441; these read ASEKTSPKRELAKDLPKSGESRCNPSE, SNQDRKYSSTLPNDVQTTSG, and QLSLEPKSDSQFQASHTGCQSPLCSAQRHTPQ. Residues 146–161 show a composition bias toward basic and acidic residues; the sequence is TSPKRELAKDLPKSGE. Over residues 418 to 441 the composition is skewed to polar residues; the sequence is DSQFQASHTGCQSPLCSAQRHTPQ. Residues 553 to 573 form a helical membrane-spanning segment; that stretch reads GFGGITMLFTGYFVLCCSWSF. Residues 574-609 lie on the Mitochondrial intermembrane side of the membrane; that stretch reads RRLKKLCRPLPWKSTVPPCIGVAKTTGDCRSKTCLD.

The protein localises to the mitochondrion inner membrane. It localises to the mitochondrion matrix. It is found in the mitochondrion nucleoid. Its function is as follows. Critical regulator of mitochondrial DNA (mtDNA) abundance. Binds dsDNA throughout the mitochondrial genome without sequence specificity and controls mtDNA copy number by promoting its replication. Also plays important roles in mitochondrial metabolism and cell proliferation. The protein is Mitochondrial nucleoid-associated protein 1 of Homo sapiens (Human).